The chain runs to 1363 residues: Vascular endothelial growth factor receptor 3 (1363 aa).

A signal peptide spans 1–24 (MQPGAALNRRLWLCLGLLQGLANG). The Extracellular segment spans residues 25 to 775 (YSMTPPTLNI…EGSEDKGSME (751 aa)). N-linked (GlcNAc...) asparagine glycans are attached at residues N33, N104, N166, N251, N299, and N411. 7 consecutive Ig-like C2-type domains span residues 44 to 118 (GDSL…YIKA), 151 to 213 (KDSM…WGDQ), 230 to 326 (YDIQ…TEVI), 331 to 415 (PFIS…ISLE), 422 to 552 (PHIH…FYVT), 555 to 671 (PDGF…KYLS), and 678 to 764 (PRLT…ASVA). Cystine bridges form between C51–C111 and C158–C206. An intrachain disulfide couples C252 to C310. 3 disulfide bridges follow: C445-C534, C466-C486, and C578-C653. N-linked (GlcNAc...) asparagine glycans are attached at residues N515, N527, N582, N594, and N683. A disulfide bridge links C699 with C751. N-linked (GlcNAc...) asparagine glycosylation occurs at N758. A helical transmembrane segment spans residues 776–796 (IVILIGTGVIAVFFWVLLLLI). At 797-1363 (FCNMKRPAHA…GSTFFADSNY (567 aa)) the chain is on the cytoplasmic side. Residues Y830 and Y833 each carry the phosphotyrosine; by SRC modification. In terms of domain architecture, Protein kinase spans 845–1173 (LHLGRVLGHG…DLVEILGDLL (329 aa)). Residues 851 to 859 (LGHGAFGKV) and K879 each bind ATP. The Proton acceptor role is filled by D1037. A Phosphotyrosine; by autocatalysis and SRC modification is found at Y1063. Y1068, Y1230, Y1231, and Y1265 each carry phosphotyrosine; by autocatalysis. Residues 1289–1317 (SRHRQEGSFSRKDPGQHMDISRGHPDLQG) are compositionally biased toward basic and acidic residues. The disordered stretch occupies residues 1289 to 1330 (SRHRQEGSFSRKDPGQHMDISRGHPDLQGRRRRPTQGAQGGK). Residues Y1333 and Y1337 each carry the phosphotyrosine; by autocatalysis and SRC modification. The residue at position 1363 (Y1363) is a Phosphotyrosine; by autocatalysis.

The protein belongs to the protein kinase superfamily. Tyr protein kinase family. CSF-1/PDGF receptor subfamily. Interacts with VEGFC and VEGFD. Monomer in the absence of bound VEGFC or VEGFD. Homodimer in the presence of bound VEGFC or VEGFD. Can also form a heterodimer with KDR. Interacts with PTPN14; the interaction is enhanced by stimulation with VEGFC. Interacts with CRK, GRB2, PTK2/FAK1, SHC1, PIK3R1 and PTPN11/SHP-2. Identified in a complex with SRC and ITGB1. Identified in a complex with SRC and ITGB1. Post-translationally, autophosphorylated on tyrosine residues upon ligand binding. Autophosphorylation occurs in trans, i.e. one subunit of the dimeric receptor phosphorylates tyrosine residues on the other subunit. Phosphorylation in response to H(2)O(2) is mediated by a process that requires SRC and PRKCD activity. Phosphorylation at Tyr-1068 is required for autophosphorylation at additional tyrosine residues. Phosphorylation at Tyr-1063 and Tyr-1337 is important for interaction with CRK and subsequent activation of MAPK8. Phosphorylation at Tyr-1230, Tyr-1231 and Tyr-1337 is important for interaction with GRB2 and subsequent activation of the AKT1 and MAPK1/ERK2 and/or MAPK3/ERK1 signaling pathways. In response to endothelial cell adhesion onto collagen, can also be phosphorylated in the absence of FLT4 kinase activity by SRC.

It is found in the cell membrane. The protein localises to the cytoplasm. The protein resides in the nucleus. It carries out the reaction L-tyrosyl-[protein] + ATP = O-phospho-L-tyrosyl-[protein] + ADP + H(+). Its activity is regulated as follows. Present in an inactive conformation in the absence of bound ligand. Binding of VEGFC or VEGFD leads to dimerization and activation by autophosphorylation on tyrosine residues. Its function is as follows. Tyrosine-protein kinase that acts as a cell-surface receptor for VEGFC and VEGFD, and plays an essential role in adult lymphangiogenesis and in the development of the vascular network and the cardiovascular system during embryonic development. Promotes proliferation, survival and migration of endothelial cells, and regulates angiogenic sprouting. Signaling by activated FLT4 leads to enhanced production of VEGFC, and to a lesser degree VEGFA, thereby creating a positive feedback loop that enhances FLT4 signaling. Modulates KDR signaling by forming heterodimers. Mediates activation of the MAPK1/ERK2, MAPK3/ERK1 signaling pathway, of MAPK8 and the JUN signaling pathway, and of the AKT1 signaling pathway. Phosphorylates SHC1. Mediates phosphorylation of PIK3R1, the regulatory subunit of phosphatidylinositol 3-kinase. Promotes phosphorylation of MAPK8 at 'Thr-183' and 'Tyr-185', and of AKT1 at 'Ser-473'. This is Vascular endothelial growth factor receptor 3 (Flt4) from Rattus norvegicus (Rat).